The sequence spans 38 residues: Large ribosomal subunit protein bL36 (38 aa).

It belongs to the bacterial ribosomal protein bL36 family.

The sequence is that of Large ribosomal subunit protein bL36 from Bacteroides fragilis (strain ATCC 25285 / DSM 2151 / CCUG 4856 / JCM 11019 / LMG 10263 / NCTC 9343 / Onslow / VPI 2553 / EN-2).